The sequence spans 511 residues: Glutamyl-tRNA(Gln) amidotransferase subunit A, mitochondrial (511 aa).

Residues K72 and S149 each act as charge relay system in the active site. S173 serves as the catalytic Acyl-ester intermediate.

It belongs to the amidase family. GatA subfamily. In terms of assembly, subunit of the heterotrimeric GatCAB amidotransferase (AdT) complex, composed of A, B and C subunits.

It is found in the mitochondrion. It catalyses the reaction L-glutamyl-tRNA(Gln) + L-glutamine + ATP + H2O = L-glutaminyl-tRNA(Gln) + L-glutamate + ADP + phosphate + H(+). Functionally, allows the formation of correctly charged Gln-tRNA(Gln) through the transamidation of misacylated Glu-tRNA(Gln) in the mitochondria. The reaction takes place in the presence of glutamine and ATP through an activated gamma-phospho-Glu-tRNA(Gln). This is Glutamyl-tRNA(Gln) amidotransferase subunit A, mitochondrial from Fusarium vanettenii (strain ATCC MYA-4622 / CBS 123669 / FGSC 9596 / NRRL 45880 / 77-13-4) (Fusarium solani subsp. pisi).